Reading from the N-terminus, the 153-residue chain is Large ribosomal subunit protein uL15 (153 aa).

The interval 21 to 42 is disordered; sequence RGIGSGKGKTGGRGIKGQKSRS. Over residues 23–35 the composition is skewed to gly residues; the sequence is IGSGKGKTGGRGI.

Belongs to the universal ribosomal protein uL15 family. In terms of assembly, part of the 50S ribosomal subunit.

In terms of biological role, binds to the 23S rRNA. The sequence is that of Large ribosomal subunit protein uL15 from Rickettsia peacockii (strain Rustic).